A 270-amino-acid polypeptide reads, in one-letter code: Probable feruloyl esterase C (270 aa).

The signal sequence occupies residues 1–21; it reads MIKSIILQAIMVLSTLTSVHG. An N-linked (GlcNAc...) asparagine glycan is attached at asparagine 23.

This sequence belongs to the faeC family.

The protein resides in the secreted. It carries out the reaction feruloyl-polysaccharide + H2O = ferulate + polysaccharide.. Involved in degradation of plant cell walls. Hydrolyzes the feruloyl-arabinose ester bond in arabinoxylans, and the feruloyl-galactose ester bond in pectin. Active against paranitrophenyl-acetate, methyl ferulate and wheat arabinoxylan. The sequence is that of Probable feruloyl esterase C (faeC) from Aspergillus oryzae (strain ATCC 42149 / RIB 40) (Yellow koji mold).